Here is a 385-residue protein sequence, read N- to C-terminus: Succinate--CoA ligase [ADP-forming] subunit beta (385 aa).

In terms of domain architecture, ATP-grasp spans 9 to 237 (KEILRQFGVN…LEAEHPLEIE (229 aa)). ATP contacts are provided by residues Lys-45, 52-54 (GRG), Val-94, and Glu-101. The Mg(2+) site is built by Asn-192 and Asp-206. Residues Asn-257 and 314 to 316 (GIT) contribute to the substrate site.

Belongs to the succinate/malate CoA ligase beta subunit family. Heterotetramer of two alpha and two beta subunits. Mg(2+) is required as a cofactor.

The catalysed reaction is succinate + ATP + CoA = succinyl-CoA + ADP + phosphate. The enzyme catalyses GTP + succinate + CoA = succinyl-CoA + GDP + phosphate. Its pathway is carbohydrate metabolism; tricarboxylic acid cycle; succinate from succinyl-CoA (ligase route): step 1/1. Its function is as follows. Succinyl-CoA synthetase functions in the citric acid cycle (TCA), coupling the hydrolysis of succinyl-CoA to the synthesis of either ATP or GTP and thus represents the only step of substrate-level phosphorylation in the TCA. The beta subunit provides nucleotide specificity of the enzyme and binds the substrate succinate, while the binding sites for coenzyme A and phosphate are found in the alpha subunit. The protein is Succinate--CoA ligase [ADP-forming] subunit beta of Deinococcus deserti (strain DSM 17065 / CIP 109153 / LMG 22923 / VCD115).